A 403-amino-acid chain; its full sequence is Alkaline protease 1 (403 aa).

The first 21 residues, 1–21 (MLSIKRTLLLLGAVLPAVFGA), serve as a signal peptide directing secretion. A propeptide spanning residues 22 to 125 (PVQETRRAAQ…QIWYIDALTT (104 aa)) is cleaved from the precursor. One can recognise an Inhibitor I9 domain in the interval 36 to 120 (KYIVTFKPGT…HVEEDQIWYI (85 aa)). In terms of domain architecture, Peptidase S8 spans 130-403 (PWGLGSISHK…PNKLAYNGNA (274 aa)). Residues Asp162 and His193 each act as charge relay system in the active site. N-linked (GlcNAc...) asparagine glycans are attached at residues Asn253 and Asn307. The Charge relay system role is filled by Ser349.

This sequence belongs to the peptidase S8 family.

It is found in the secreted. The enzyme catalyses Hydrolysis of proteins with broad specificity, and of Bz-Arg-OEt &gt; Ac-Tyr-OEt. Does not hydrolyze peptide amides.. In terms of biological role, secreted alkaline protease that allows assimilation of proteinaceous substrates. This is Alkaline protease 1 (alp1) from Neosartorya fischeri (strain ATCC 1020 / DSM 3700 / CBS 544.65 / FGSC A1164 / JCM 1740 / NRRL 181 / WB 181) (Aspergillus fischerianus).